The sequence spans 200 residues: Probable molybdenum cofactor guanylyltransferase (200 aa).

Residues Leu9–Gly11, Lys21, Asp69, and Asp100 each bind GTP. Asp100 contacts Mg(2+).

It belongs to the MobA family. Mg(2+) is required as a cofactor.

Its subcellular location is the cytoplasm. The catalysed reaction is Mo-molybdopterin + GTP + H(+) = Mo-molybdopterin guanine dinucleotide + diphosphate. Functionally, transfers a GMP moiety from GTP to Mo-molybdopterin (Mo-MPT) cofactor (Moco or molybdenum cofactor) to form Mo-molybdopterin guanine dinucleotide (Mo-MGD) cofactor. This chain is Probable molybdenum cofactor guanylyltransferase, found in Bacillus cereus (strain Q1).